We begin with the raw amino-acid sequence, 238 residues long: 3-deoxy-D-manno-octulosonic acid kinase (238 aa).

Aspartate 167 is a catalytic residue.

The protein belongs to the protein kinase superfamily. KdkA/RfaP family.

The protein resides in the cell inner membrane. It carries out the reaction an alpha-Kdo-(2-&gt;6)-lipid IVA + ATP = a 4-O-phospho-alpha-Kdo-(2-&gt;6)-lipid IVA + ADP + H(+). Its pathway is bacterial outer membrane biogenesis; LPS core biosynthesis. Its function is as follows. Catalyzes the ATP-dependent phosphorylation of the 3-deoxy-D-manno-octulosonic acid (Kdo) residue in Kdo-lipid IV(A) at the 4-OH position. The protein is 3-deoxy-D-manno-octulosonic acid kinase of Vibrio parahaemolyticus serotype O3:K6 (strain RIMD 2210633).